Here is a 178-residue protein sequence, read N- to C-terminus: CRISPR system ring nuclease SSO2081 (178 aa).

The transition state stabilizer stretch occupies residues 105–106 (RK).

This sequence belongs to the cOA ring nuclease family. In terms of assembly, homodimer. The cofactor is Does not require a metal cofactor..

The protein resides in the cytoplasm. The enzyme catalyses cyclic tetraadenylate = 2 5'-hydroxy-diadenylate 2',3'-cylic phosphate. Functionally, CRISPR (clustered regularly interspaced short palindromic repeat) is an adaptive immune system that provides protection against mobile genetic elements (viruses, transposable elements and conjugative plasmids). CRISPR clusters contain spacers, sequences complementary to antecedent mobile elements, and target invading nucleic acids. CRISPR clusters are transcribed and processed into CRISPR RNA (crRNA). A nuclease that degrades cyclic oligoadenylates (cOA), second messengers that induce an antiviral state important for defense against invading nucleic acids. Destruction of cOA deactivates the Csx1 ribonuclease, preventing uncontrolled degradation of cellular RNA. Degrades cA4 (a tetraadenylate ring) into a linear diadenylate product with 5'-OH and 2',3'-cyclic phosphate termini. Is 10-fold more active than SSO1393, suggesting this is the major cA4 degradation enzyme. Is highly specific for cA4; it has very poor activity on cA6 and no discernible activity against a number of cyclic dinucleotides. There may be 2 active sites per homodimer. This is CRISPR system ring nuclease SSO2081 from Saccharolobus solfataricus (strain ATCC 35092 / DSM 1617 / JCM 11322 / P2) (Sulfolobus solfataricus).